Reading from the N-terminus, the 200-residue chain is Endochitinase (200 aa).

The active-site Proton donor is the Glu58.

This sequence belongs to the glycosyl hydrolase 19 family. Chitinase class I subfamily.

The catalysed reaction is Random endo-hydrolysis of N-acetyl-beta-D-glucosaminide (1-&gt;4)-beta-linkages in chitin and chitodextrins.. In terms of biological role, this protein functions as a defense against chitin-containing fungal pathogens. This is Endochitinase from Avena sativa (Oat).